A 269-amino-acid chain; its full sequence is Hydroxyethylthiazole kinase (269 aa).

A substrate-binding site is contributed by methionine 45. 2 residues coordinate ATP: arginine 121 and threonine 167. Position 194 (glycine 194) interacts with substrate.

Belongs to the Thz kinase family. It depends on Mg(2+) as a cofactor.

It catalyses the reaction 5-(2-hydroxyethyl)-4-methylthiazole + ATP = 4-methyl-5-(2-phosphooxyethyl)-thiazole + ADP + H(+). The protein operates within cofactor biosynthesis; thiamine diphosphate biosynthesis; 4-methyl-5-(2-phosphoethyl)-thiazole from 5-(2-hydroxyethyl)-4-methylthiazole: step 1/1. Catalyzes the phosphorylation of the hydroxyl group of 4-methyl-5-beta-hydroxyethylthiazole (THZ). The protein is Hydroxyethylthiazole kinase of Bacillus mycoides (strain KBAB4) (Bacillus weihenstephanensis).